The sequence spans 131 residues: Small ribosomal subunit protein bS6 (131 aa).

The disordered stretch occupies residues 98 to 131 (EASPMARARDERDSRRGPAGERSYDEAHAEEIGE). Over residues 104 to 131 (RARDERDSRRGPAGERSYDEAHAEEIGE) the composition is skewed to basic and acidic residues.

Belongs to the bacterial ribosomal protein bS6 family.

In terms of biological role, binds together with bS18 to 16S ribosomal RNA. The protein is Small ribosomal subunit protein bS6 of Shewanella putrefaciens (strain CN-32 / ATCC BAA-453).